The sequence spans 180 residues: MNIKQIVQGVGTQLRSLAMVFSHSFRPRDTLCYPEEKVPLAPRYRGRIVLTRDPDGDERCVACNLCAVACPVGCISLQKAERVDGRWYPEFFRINFSRCIFCGLCEEACPTTAIQLTPDFEMGEYRRQDLVYEKEDLLISGPGKYPDYNFYRVSGMSIDGKPKGSAQKEAAPIDVKSILP.

2 4Fe-4S ferredoxin-type domains span residues isoleucine 48–alanine 80 and glutamate 90–aspartate 119. [4Fe-4S] cluster is bound by residues cysteine 60, cysteine 63, cysteine 66, cysteine 70, cysteine 99, cysteine 102, cysteine 105, and cysteine 109. A disordered region spans residues glycine 160–proline 180.

The protein belongs to the complex I 23 kDa subunit family. As to quaternary structure, NDH-1 is composed of 14 different subunits. Subunits NuoA, H, J, K, L, M, N constitute the membrane sector of the complex. [4Fe-4S] cluster is required as a cofactor.

It is found in the cell inner membrane. It carries out the reaction a quinone + NADH + 5 H(+)(in) = a quinol + NAD(+) + 4 H(+)(out). Functionally, NDH-1 shuttles electrons from NADH, via FMN and iron-sulfur (Fe-S) centers, to quinones in the respiratory chain. The immediate electron acceptor for the enzyme in this species is believed to be ubiquinone. Couples the redox reaction to proton translocation (for every two electrons transferred, four hydrogen ions are translocated across the cytoplasmic membrane), and thus conserves the redox energy in a proton gradient. The sequence is that of NADH-quinone oxidoreductase subunit I from Tolumonas auensis (strain DSM 9187 / NBRC 110442 / TA 4).